The sequence spans 465 residues: Putative F-box/LRR-repeat protein At3g28410 (465 aa).

The 47-residue stretch at 27–73 folds into the F-box domain; sequence ADFINYMPDDILHHILSFIPTDLAMRTSVLSRRWRHVWCETPCLDIK. LRR repeat units lie at residues 127 to 155, 178 to 203, 207 to 225, 278 to 302, 332 to 357, 402 to 427, and 447 to 465; these read VRDF…DVTL, FCQI…TLDT, LERL…DINR, ADRY…TVGE, FVRS…TLHT, TSKL…VVWL, and VETL…QSNC.

The chain is Putative F-box/LRR-repeat protein At3g28410 from Arabidopsis thaliana (Mouse-ear cress).